Consider the following 230-residue polypeptide: Modulator of macroautophagy TMEM150B-A (230 aa).

Position 1 (methionine 1) is a topological domain, cytoplasmic. The helical transmembrane segment at 2–22 (WAWALLPICLTIWATAGIWIV) threads the bilayer. The Extracellular portion of the chain corresponds to 23–50 (YGMSVSNGSVNLSDGFPYISLCGTDPPQ). N-linked (GlcNAc...) asparagine glycosylation is found at asparagine 29 and asparagine 33. The chain crosses the membrane as a helical span at residues 51–71 (SCVFGQVLNVGAMLGVWISAI). Residues 72 to 83 (RFQQIRDYNCHS) are Cytoplasmic-facing. Residues 84–104 (VLNSVSLAMGILCALGTSIVG) form a helical membrane-spanning segment. Residues 105–115 (NFQQSNQLETH) are Extracellular-facing. Residues 116-136 (LAGAFLAFVIGNIYFWMQTAL) traverse the membrane as a helical segment. The Cytoplasmic segment spans residues 137–150 (TYMVKPTHGGCYIG). A helical transmembrane segment spans residues 151–171 (PIRFCLSVACTALIVLMAVFL). The Extracellular segment spans residues 172 to 183 (KMNMKSISAICE). The chain crosses the membrane as a helical span at residues 184–204 (WIVAMILFLLYGLFAVDFWHL). The Cytoplasmic portion of the chain corresponds to 205–230 (DGHYFHVKKRTVIPNEMQVSTVTLSI).

It belongs to the DRAM/TMEM150 family.

The protein resides in the cell membrane. It is found in the endosome membrane. Its subcellular location is the cytoplasmic vesicle. The protein localises to the autophagosome membrane. In terms of biological role, modulator of macroautophagy that causes accumulation of autophagosomes under basal conditions and enhances autophagic flux. Represses cell death and promotes long-term clonogenic survival of cells grown in the absence of glucose in a macroautophagy-independent manner. May have some role in extracellular matrix engulfment or growth factor receptor recycling, both of which can modulate cell survival. This is Modulator of macroautophagy TMEM150B-A from Xenopus laevis (African clawed frog).